The sequence spans 155 residues: CASP-like protein 5B2 (155 aa).

Residues 1–18 (MWEVAWWRPGTWGGLAMR) are Cytoplasmic-facing. Residues 19–39 (VGQVAFAGASIGVMASGAGFA) traverse the membrane as a helical segment. Asparagine 40 is a glycosylation site (N-linked (GlcNAc...) asparagine). Topologically, residues 40 to 43 (NYTA) are extracellular. The chain crosses the membrane as a helical span at residues 44 to 64 (FCYLIASMGLQSLWSLGLACL). The Cytoplasmic portion of the chain corresponds to 65–77 (DVYALTVKRDLNN). A helical membrane pass occupies residues 78–98 (ALLVSLFVIGDWVTALLSFAA). Residues 99 to 128 (SCSAGGVMVLFKRDVLFCRRYPQLPCGRFE) lie on the Extracellular side of the membrane. A helical membrane pass occupies residues 129–149 (LAVALAFLSWALSATSAIIMF). Topologically, residues 150 to 155 (CLLAAF) are cytoplasmic.

This sequence belongs to the Casparian strip membrane proteins (CASP) family. Homodimer and heterodimers.

The protein resides in the cell membrane. This Oryza sativa subsp. indica (Rice) protein is CASP-like protein 5B2.